We begin with the raw amino-acid sequence, 277 residues long: MTAQSQNIVETPSRVRAHALGVNAPELAKYQDEPAQMRSGAVGKSGYLKLRFAKREHCSILAEMERRVPSLVQKALYWDEEIPELPCVTMISTSGCILQGDRLATDVHVEAGACAHVTTQSATKVHMMNANYASQIQNFIVEEGGYLEFMSDPLIPHRNSRFITDTTISIHPTATAIYSEVLMSGRKYHHADERFGFDVYSSRVAAQNLAGKELFVEKYVLEPKVESLDAVGVMQTFDAFGNVILLTPKEHHDRILARVPAHFDIKGGDCQRRDAST.

Belongs to the UreD family. As to quaternary structure, ureD, UreF and UreG form a complex that acts as a GTP-hydrolysis-dependent molecular chaperone, activating the urease apoprotein by helping to assemble the nickel containing metallocenter of UreC. The UreE protein probably delivers the nickel.

The protein localises to the cytoplasm. Its function is as follows. Required for maturation of urease via the functional incorporation of the urease nickel metallocenter. The polypeptide is Urease accessory protein UreD (Yersinia pestis (strain Pestoides F)).